Here is a 564-residue protein sequence, read N- to C-terminus: Ovochymase-2 (564 aa).

The signal sequence occupies residues 1-22 (MLISRNKLILLLGIVFFERGKS). A propeptide spans 23–51 (ATLSLPKAPSCGQSLVKVQPWNYFNIFSR) (activation peptide). The Peptidase S1 domain maps to 52–299 (ILGGSQVEKG…VLPWIHEHIQ (248 aa)). Cys-77 and Cys-93 are joined by a disulfide. The Charge relay system role is filled by His-92. An N-linked (GlcNAc...) asparagine glycan is attached at Asn-104. Position 119 (Glu-119) interacts with Ca(2+). Asp-142 (charge relay system) is an active-site residue. 5 disulfide bridges follow: Cys-176/Cys-246, Cys-207/Cys-225, Cys-236/Cys-265, Cys-311/Cys-341, and Cys-365/Cys-384. Catalysis depends on Ser-240, which acts as the Charge relay system. CUB domains are found at residues 311–421 (CSEQ…YKAL) and 431–543 (CSYL…VSFI). 2 N-linked (GlcNAc...) asparagine glycosylation sites follow: Asn-415 and Asn-451. Intrachain disulfides connect Cys-431–Cys-458 and Cys-485–Cys-506. An N-linked (GlcNAc...) asparagine glycan is attached at Asn-530.

This sequence belongs to the peptidase S1 family.

The protein localises to the secreted. May be required for sperm ADAM3 processing and consequential sperm fertilizing ability. In vitro, has an endopeptidase activity. In Homo sapiens (Human), this protein is Ovochymase-2.